A 100-amino-acid polypeptide reads, in one-letter code: Urease subunit gamma (100 aa).

Belongs to the urease gamma subunit family. As to quaternary structure, heterotrimer of UreA (gamma), UreB (beta) and UreC (alpha) subunits. Three heterotrimers associate to form the active enzyme.

The protein resides in the cytoplasm. It catalyses the reaction urea + 2 H2O + H(+) = hydrogencarbonate + 2 NH4(+). Its pathway is nitrogen metabolism; urea degradation; CO(2) and NH(3) from urea (urease route): step 1/1. The polypeptide is Urease subunit gamma (Alcanivorax borkumensis (strain ATCC 700651 / DSM 11573 / NCIMB 13689 / SK2)).